The following is a 172-amino-acid chain: Adenine phosphoribosyltransferase (172 aa).

It belongs to the purine/pyrimidine phosphoribosyltransferase family. In terms of assembly, homodimer.

It is found in the cytoplasm. The catalysed reaction is AMP + diphosphate = 5-phospho-alpha-D-ribose 1-diphosphate + adenine. Its pathway is purine metabolism; AMP biosynthesis via salvage pathway; AMP from adenine: step 1/1. Its function is as follows. Catalyzes a salvage reaction resulting in the formation of AMP, that is energically less costly than de novo synthesis. The chain is Adenine phosphoribosyltransferase from Exiguobacterium sp. (strain ATCC BAA-1283 / AT1b).